Consider the following 63-residue polypeptide: Large ribosomal subunit protein uL29 (63 aa).

Belongs to the universal ribosomal protein uL29 family.

The protein is Large ribosomal subunit protein uL29 of Vibrio parahaemolyticus serotype O3:K6 (strain RIMD 2210633).